The primary structure comprises 268 residues: Testis-specific serine/threonine-protein kinase 3 (268 aa).

The Protein kinase domain occupies 10–265 (YQLGKTIGEG…IEEVSWHPWL (256 aa)). ATP is bound by residues 16–24 (IGEGTYSKV) and lysine 39. Aspartate 134 acts as the Proton acceptor in catalysis. The residue at position 166 (serine 166) is a Phosphoserine; by autocatalysis. Threonine 168 carries the post-translational modification Phosphothreonine; by PDPK1.

Belongs to the protein kinase superfamily. CAMK Ser/Thr protein kinase family. Mg(2+) serves as cofactor. The cofactor is Mn(2+). Post-translationally, autophosphorylated at Ser-166. Phosphorylation at Thr-168 by PDPK1 activates the serine/threonine protein kinase activity. Developmentally expressed in testicular germ cells. In adult testis, expression was detected in round and condensing spermatids, but not in meiotic pachytene spermatocytes. Not expressed in brain, ovary, kidney, liver or early embryonic cells.

Its subcellular location is the cell projection. It localises to the cilium. It is found in the flagellum. It catalyses the reaction L-seryl-[protein] + ATP = O-phospho-L-seryl-[protein] + ADP + H(+). It carries out the reaction L-threonyl-[protein] + ATP = O-phospho-L-threonyl-[protein] + ADP + H(+). Its activity is regulated as follows. Activated by phosphorylation on Thr-168 by PDPK1. Serine/threonine protein kinase required for spermatid development and male fertility. The polypeptide is Testis-specific serine/threonine-protein kinase 3 (Mus musculus (Mouse)).